Consider the following 229-residue polypeptide: Endonuclease V (229 aa).

Mg(2+) is bound by residues Asp-43 and Asp-111.

This sequence belongs to the endonuclease V family. Mg(2+) is required as a cofactor.

Its subcellular location is the cytoplasm. The catalysed reaction is Endonucleolytic cleavage at apurinic or apyrimidinic sites to products with a 5'-phosphate.. DNA repair enzyme involved in the repair of deaminated bases. Selectively cleaves double-stranded DNA at the second phosphodiester bond 3' to a deoxyinosine leaving behind the intact lesion on the nicked DNA. This Rippkaea orientalis (strain PCC 8801 / RF-1) (Cyanothece sp. (strain PCC 8801)) protein is Endonuclease V.